The chain runs to 648 residues: Protein kinase YegI (648 aa).

The Protein kinase domain maps to Thr-15–Leu-302. ATP is bound by residues Leu-21–Val-29 and Lys-41. The Proton acceptor role is filled by Asp-143.

Autophosphorylated. Dephosphorylated by PphC.

Its function is as follows. Probable serine/threonine kinase. This Escherichia coli (strain K12) protein is Protein kinase YegI (yegI).